Reading from the N-terminus, the 186-residue chain is Tumor necrosis factor, alpha-induced protein 8-like protein 2 A (186 aa).

It belongs to the TNFAIP8 family. TNFAIP8L2 subfamily.

In terms of biological role, acts as a negative regulator of innate and adaptive immunity by maintaining immune homeostasis. Negative regulator of Toll-like receptor and T-cell receptor function. Prevents hyperresponsiveness of the immune system and maintains immune homeostasis. Inhibits jun/ap1 and NF-kappa-B activation. Promotes Fas-induced apoptosis. In Danio rerio (Zebrafish), this protein is Tumor necrosis factor, alpha-induced protein 8-like protein 2 A (tnfaip8l2a).